Consider the following 403-residue polypeptide: 4-hydroxyphenylpyruvate dioxygenase (403 aa).

VOC domains lie at 25–169 (GYDH…LVER) and 201–359 (RIDH…LFTK). The Fe cation site is built by H204, H287, and E370.

Belongs to the 4HPPD family. As to quaternary structure, homodimer. Fe cation serves as cofactor.

The enzyme catalyses 3-(4-hydroxyphenyl)pyruvate + O2 = homogentisate + CO2. The protein operates within amino-acid degradation; L-phenylalanine degradation; acetoacetate and fumarate from L-phenylalanine: step 3/6. Its function is as follows. 4-hydroxyphenylpyruvate dioxygenase; part of the L-tyrosine degradation gene cluster that mediates the biosynthesis of the brownish pigment pyomelanin as an alternative melanin. The 4-hydroxyphenylpyruvate dioxygenase hppD catalyzes the conversion of 4-hydroxyphenylpyruvate to homogentisic acid (HGA). The protein hmgX is crucial for this conversion and thus, probably functions as an accessory factor to mediate specific activity of hppD. The homogentisate 1,2-dioxygenase hmgA is then involved in the cleavage of the aromatic ring of HGA and its conversion to 4-maleylacetoacetate. When hmgA activity is lowered by the cell wall integrity (CWI) signaling pathway, HGA accumulates and leads to the production of pyomelanin through benzoquinone acetic acid after oxidation and polymerization. On the opposite, in non-stress conditions, both hppD and hmgA activities are balanced and HGA is degraded into 4-maleylacetoacetate. 4-maleylacetoacetate is further converted to 4-fumarylacetoacetate by the maleylacetoacetate isomerase maiA, which is degraded into fumarate and acetoacetate by the fumarylacetoacetase fahA. The protein is 4-hydroxyphenylpyruvate dioxygenase of Aspergillus fumigatus (strain ATCC MYA-4609 / CBS 101355 / FGSC A1100 / Af293) (Neosartorya fumigata).